Here is a 152-residue protein sequence, read N- to C-terminus: Transcriptional regulator MraZ (152 aa).

SpoVT-AbrB domains lie at 5–52 (ASAI…PLHE) and 81–124 (AHEV…DEQA).

This sequence belongs to the MraZ family. As to quaternary structure, forms oligomers.

It is found in the cytoplasm. The protein resides in the nucleoid. The polypeptide is Transcriptional regulator MraZ (Shewanella sp. (strain MR-7)).